Here is a 266-residue protein sequence, read N- to C-terminus: MQLSFIESCFHAFKDQSALVHNLTNDVAHNTVANVLLACRASPAMVHDIQEAPDFVCLSDALAINIGTLTQTRLNSMLATAKMAHSKGIPWVLDPVAVGATAFRQQACRQLLSLQPDVIRGNASEILALAGMSSQSRGIDSGDSVAAAHAAAEALTQYAKVVVVTGEIDWVTDGMNRWAINHGHPMMTQVTAIGCALTALIAGFVGANKKAMAQAAVTALCYYGQAAEHAMQIAQGPGSFYIHFLDSLYALQATDVSQQARVTLYE.

Residue methionine 45 coordinates substrate. ATP is bound by residues arginine 120 and threonine 165. Residue alanine 192 coordinates substrate.

The protein belongs to the Thz kinase family. The cofactor is Mg(2+).

It carries out the reaction 5-(2-hydroxyethyl)-4-methylthiazole + ATP = 4-methyl-5-(2-phosphooxyethyl)-thiazole + ADP + H(+). Its pathway is cofactor biosynthesis; thiamine diphosphate biosynthesis; 4-methyl-5-(2-phosphoethyl)-thiazole from 5-(2-hydroxyethyl)-4-methylthiazole: step 1/1. Catalyzes the phosphorylation of the hydroxyl group of 4-methyl-5-beta-hydroxyethylthiazole (THZ). This is Hydroxyethylthiazole kinase from Psychrobacter sp. (strain PRwf-1).